The primary structure comprises 564 residues: MHSYDYWLIIAFFAVVLVPAPFLGRFYYKVMEGQRTWLTPVLGPVERACYRLSGVDEQQEQSWQKYMLALLAFNLAGFLLLFAILLFQDYLPLNPQKLPGQEWTLAFNTAVSFMTNTNWQSYSGEASLSYLSQMAGLTVQNFVSAATGLAVLVALCRGIGRKSTKTLGNFWVDMTRATLYGLLPLCLVLALFLVWQGVPQTFAHYVDAVTMQGVDQVIPLGPAASQIAIKQLGTNGGGFFGVNSAHPFEDPTAWANLFELAAIILIPVALVFTFGHYVKDLRQSRAILGCMLALFLIGGATSLWAEYQPNPTLNNPAVEQAAPLEGKEARFGTTGTVLWSVTTTAASNGSVNGMQDSLNPLSGMVALVNMMVGEVIFGGVGAGMYGMLLNVLIAVFLAGLMIGRTPEYLGKKLQAKEVQLLVVTLLVMPVGVLVLGAIAASLPGPAGAISNPGPHGFSQLLYAYTSASANNGSAFGGFSANTPFHNLMLGLGMLIGRFGYILPVLALAGSLAMKKTAPIGQNSFPTHGPLFVTLLTVTILLVGGLTFLPTLALGPIAEHLSMGF.

10 consecutive transmembrane segments (helical) span residues 4–24 (YDYWLIIAFFAVVLVPAPFLG), 67–87 (MLALLAFNLAGFLLLFAILLF), 135–155 (AGLTVQNFVSAATGLAVLVAL), 179–199 (LYGLLPLCLVLALFLVWQGVP), 254–274 (WANLFELAAIILIPVALVFTF), 286–306 (AILGCMLALFLIGGATSLWAE), 382–402 (AGMYGMLLNVLIAVFLAGLMI), 420–440 (LLVVTLLVMPVGVLVLGAIAA), 487–507 (LMLGLGMLIGRFGYILPVLAL), and 528–548 (GPLFVTLLTVTILLVGGLTFL).

The protein belongs to the KdpA family. As to quaternary structure, the system is composed of three essential subunits: KdpA, KdpB and KdpC.

It is found in the cell inner membrane. Functionally, part of the high-affinity ATP-driven potassium transport (or Kdp) system, which catalyzes the hydrolysis of ATP coupled with the electrogenic transport of potassium into the cytoplasm. This subunit binds the periplasmic potassium ions and delivers the ions to the membrane domain of KdpB through an intramembrane tunnel. In Pseudomonas fluorescens (strain SBW25), this protein is Potassium-transporting ATPase potassium-binding subunit.